A 622-amino-acid chain; its full sequence is Threonine--tRNA ligase (622 aa).

The segment at 1–141 is editing domain; the sequence is MKTLLIHSDY…SRKITTERKE (141 aa). Residues 199 to 498 form a catalytic region; the sequence is PHVKYIKEKE…TLENKPPALP (300 aa). 3 residues coordinate Zn(2+): C291, H343, and H467.

The protein belongs to the class-II aminoacyl-tRNA synthetase family. As to quaternary structure, homodimer. The cofactor is Zn(2+).

The protein localises to the cytoplasm. It carries out the reaction tRNA(Thr) + L-threonine + ATP = L-threonyl-tRNA(Thr) + AMP + diphosphate + H(+). Its function is as follows. Catalyzes the attachment of threonine to tRNA(Thr) in a two-step reaction: L-threonine is first activated by ATP to form Thr-AMP and then transferred to the acceptor end of tRNA(Thr). Also edits incorrectly charged L-seryl-tRNA(Thr). This Methanococcus maripaludis (strain C5 / ATCC BAA-1333) protein is Threonine--tRNA ligase.